Reading from the N-terminus, the 580-residue chain is Putative multidrug export ATP-binding/permease protein YgaD (580 aa).

The Cytoplasmic segment spans residues 1 to 17 (MGVMKRYMQFVKPYKKQ). A helical transmembrane segment spans residues 18-38 (IFVTVLIGIVKFSIPLALPLL). An ABC transmembrane type-1 domain is found at 19 to 307 (FVTVLIGIVK…LINSSTTLTQ (289 aa)). The Extracellular segment spans residues 39-57 (LKYVVDDIIQGGGTASDKT). The helical transmembrane segment at 58–78 (TSLFTIMAIMFALFLILRPPV) threads the bilayer. At 79-135 (EYYRQYFAQWTASKVLYDIRAKLFDHIQKLSLRFYANTRTGEVISRVINDVEQTKDF) the chain is on the cytoplasmic side. A helical transmembrane segment spans residues 136-156 (VITGLMNIWLDMLTILIVISI). The Extracellular segment spans residues 157–163 (MLTLDVK). Residues 164–184 (LTLISIVLFPLYGISVKYFYG) form a helical membrane-spanning segment. The Cytoplasmic segment spans residues 185–243 (RLRKLTRERSQALAQVQGHLHERIQGMPVIRSFAIEDHEQAQFNEKNGHFLDKAIRHTN). The chain crosses the membrane as a helical span at residues 244–263 (WNAKTFAVVNTITDLAPLIV). The Extracellular portion of the chain corresponds to 264-268 (IACAG). A helical transmembrane segment spans residues 269–288 (YFVINGPLTVGTMVAFVGYI). At 289–580 (DRMYNPVRRL…KHLFTIQNLN (292 aa)) the chain is on the cytoplasmic side. The region spanning 341-576 (VEFQNVSFQY…ESQYKHLFTI (236 aa)) is the ABC transporter domain. 375 to 382 (GMSGGGKS) contacts ATP.

The protein belongs to the ABC transporter superfamily. As to quaternary structure, homodimer.

The protein localises to the cell membrane. May be involved in multidrug export. Transmembrane domains (TMD) form a pore in the cell membrane and the ATP-binding domain (NBD) is responsible for energy generation. This Bacillus subtilis (strain 168) protein is Putative multidrug export ATP-binding/permease protein YgaD (ygaD).